The sequence spans 469 residues: Properdin (469 aa).

A signal peptide spans 1-27; sequence MITEGAQAPRLLLPPLLLLLTLPATGS. TSP type-1 domains are found at residues 28–76, 77–134, 136–191, 193–255, 257–313, 315–377, and 379–462; these read DPVL…QPCR, SPRW…QCCP, MGGW…QVCP, HGAW…PPCP, AGGW…VPCP, DGEW…QHCP, and KGSW…PACK. Cystine bridges form between cysteine 32–cysteine 56, cysteine 43–cysteine 72, and cysteine 57–cysteine 75. Tryptophan 83 and tryptophan 86 each carry a C-linked (Man) tryptophan glycan. Cystine bridges form between cysteine 89–cysteine 127, cysteine 93–cysteine 133, cysteine 104–cysteine 111, cysteine 132–cysteine 170, cysteine 148–cysteine 184, cysteine 152–cysteine 190, and cysteine 163–cysteine 174. O-linked (Fuc...) threonine glycosylation occurs at threonine 92. C-linked (Man) tryptophan glycosylation is found at tryptophan 139, tryptophan 142, and tryptophan 145. O-linked (Fuc...) threonine glycosylation occurs at threonine 151. Tryptophan 196, tryptophan 199, and tryptophan 202 each carry a C-linked (Man) tryptophan glycan. 3 disulfide bridges follow: cysteine 205–cysteine 248, cysteine 209–cysteine 254, and cysteine 224–cysteine 238. A glycan (O-linked (Fuc...) serine) is linked at serine 208. The tract at residues 219–238 is disordered; sequence TRSRKCSAPEPSQKPPGKPC. 2 C-linked (Man) tryptophan glycosylation sites follow: tryptophan 260 and tryptophan 263. 3 disulfides stabilise this stretch: cysteine 269-cysteine 306, cysteine 273-cysteine 312, and cysteine 284-cysteine 296. O-linked (Fuc...) threonine glycosylation is present at threonine 272. C-linked (Man) tryptophan glycans are attached at residues tryptophan 321 and tryptophan 324. 3 disulfide bridges follow: cysteine 327–cysteine 370, cysteine 337–cysteine 376, and cysteine 350–cysteine 360. Residues 351–359 are interaction with Complement C3 beta chain; the sequence is RGRKFDGHR. C-linked (Man) tryptophan glycosylation is found at tryptophan 382, tryptophan 385, and tryptophan 388. Intrachain disulfides connect cysteine 391/cysteine 455, cysteine 395/cysteine 461, and cysteine 407/cysteine 439. Asparagine 428 is a glycosylation site (N-linked (GlcNAc...) (complex) asparagine).

In terms of assembly, in plasma, properdin exists as dimers, trimers or tetramers in the relative proportions of 26:54:20. Interacts with the pro-C3-convertase enzyme complex (C3b-Bb) comprised of Complement C3 beta chain (C3b) and the Complement factor B Bb fragment (Bb), where it binds (via its TSP type-1 5 domain) with C3b and Bb. This interaction stabilizes the complex and allows it to become the active C3-convertase enzyme complex (C3b-Bb-FP). Interacts with C3b. Interacts with CFB.

It localises to the secreted. A positive regulator of the alternate pathway (AP) of complement. It binds to and stabilizes the C3- and C5-convertase enzyme complexes. Inhibits CFI-CFH mediated degradation of Complement C3 beta chain (C3b). This Homo sapiens (Human) protein is Properdin.